The primary structure comprises 234 residues: uncharacterized protein (234 aa).

Residues 24 to 83 (VERRNELVDGTIEAIRRHGRFLSMDEIAAEIGVSKTVLYRYFVDKNDLTTAVMMRFTQTT) enclose the HTH tetR-type domain. The segment at residues 46-65 (SMDEIAAEIGVSKTVLYRYF) is a DNA-binding region (H-T-H motif).

This is an uncharacterized protein from Mycobacterium tuberculosis (strain CDC 1551 / Oshkosh).